The primary structure comprises 196 residues: Dephospho-CoA kinase (196 aa).

Positions 6–196 (AIALTGGIGT…QVERFLKTLL (191 aa)) constitute a DPCK domain. 14-19 (GTGKST) serves as a coordination point for ATP.

The protein belongs to the CoaE family.

The protein resides in the cytoplasm. The catalysed reaction is 3'-dephospho-CoA + ATP = ADP + CoA + H(+). It participates in cofactor biosynthesis; coenzyme A biosynthesis; CoA from (R)-pantothenate: step 5/5. In terms of biological role, catalyzes the phosphorylation of the 3'-hydroxyl group of dephosphocoenzyme A to form coenzyme A. In Helicobacter pylori (strain ATCC 700392 / 26695) (Campylobacter pylori), this protein is Dephospho-CoA kinase.